Reading from the N-terminus, the 342-residue chain is MPKDQNLDIARKQDHIEINLTKNVESTLKSGFESIQFIHNALPEINYDIIDTSTTFLGKYLQAPILISSMTGGTARARDINYRLAQVAQKAGIAMGLGSMRVLLTKPDTITTFAIRHIAPDIPLLANIGAVQLNYGVTPKECQYLVDVVKADALILHLNVLQELTQPEGNRNWENLLPRIQELVNYLSVPVVVKEVGYGLSKKVAESLIKVGVEVLDIAGSGGTSWSQVEAYRATNSLQNRIASSFISWGIPTLDSLKMVREVSGNIAIIASGGLKSGIDGAKAIRMGASIFGLAGQLLKAADISENLVSEEIQLIIEQLKITMICTGSRTLKDLAKAEIRL.

11 to 12 contributes to the substrate binding site; that stretch reads RK. FMN is bound by residues serine 68, 69 to 71, serine 99, and asparagine 127; that span reads SMT. 99-101 is a binding site for substrate; the sequence is SMR. Substrate is bound at residue glutamine 162. Glutamate 163 serves as a coordination point for Mg(2+). Residues lysine 194, threonine 224, 274 to 276, and 295 to 296 each bind FMN; these read GLK and AG.

The protein belongs to the IPP isomerase type 2 family. Homooctamer. Dimer of tetramers. FMN serves as cofactor. NADPH is required as a cofactor. Requires Mg(2+) as cofactor.

The protein localises to the cytoplasm. It catalyses the reaction isopentenyl diphosphate = dimethylallyl diphosphate. In terms of biological role, involved in the biosynthesis of isoprenoids. Catalyzes the 1,3-allylic rearrangement of the homoallylic substrate isopentenyl (IPP) to its allylic isomer, dimethylallyl diphosphate (DMAPP). This is Isopentenyl-diphosphate delta-isomerase from Rickettsia akari (strain Hartford).